The sequence spans 175 residues: Glutamyl-tRNA(Gln) amidotransferase subunit C, mitochondrial (175 aa).

This sequence belongs to the GatC family. In terms of assembly, subunit of the heterotrimeric GatCAB amidotransferase (AdT) complex, composed of A, B and C subunits.

It is found in the mitochondrion. The enzyme catalyses L-glutamyl-tRNA(Gln) + L-glutamine + ATP + H2O = L-glutaminyl-tRNA(Gln) + L-glutamate + ADP + phosphate + H(+). Functionally, allows the formation of correctly charged Gln-tRNA(Gln) through the transamidation of misacylated Glu-tRNA(Gln) in the mitochondria. The reaction takes place in the presence of glutamine and ATP through an activated gamma-phospho-Glu-tRNA(Gln). This Caenorhabditis elegans protein is Glutamyl-tRNA(Gln) amidotransferase subunit C, mitochondrial.